The chain runs to 338 residues: NAD kinase (338 aa).

The active-site Proton acceptor is aspartate 66. Residues 66 to 67, arginine 71, 141 to 142, lysine 152, aspartate 171, 182 to 187, and alanine 206 each bind NAD(+); these read DG, ND, and TAYAFS. Residues 317–338 form a disordered region; sequence GDAGVAGTEPDKPGERDGKAGA. The segment covering 325–338 has biased composition (basic and acidic residues); sequence EPDKPGERDGKAGA.

It belongs to the NAD kinase family. Requires a divalent metal cation as cofactor.

The protein localises to the cytoplasm. It catalyses the reaction NAD(+) + ATP = ADP + NADP(+) + H(+). Its function is as follows. Involved in the regulation of the intracellular balance of NAD and NADP, and is a key enzyme in the biosynthesis of NADP. Catalyzes specifically the phosphorylation on 2'-hydroxyl of the adenosine moiety of NAD to yield NADP. In Bifidobacterium longum subsp. infantis (strain ATCC 15697 / DSM 20088 / JCM 1222 / NCTC 11817 / S12), this protein is NAD kinase.